The chain runs to 1360 residues: MGNQQSSGIEGSKPISAFYYNNISTVISRDGFYFFNNQSQRFESSKRPITFVIYDEEGNQFITGEDDFFIRLYNEDGTYIKQLPNLQSNITTDVIAISHQDFIRVLFPIRNIDFHQINSNSNNSNTMLLSGGMDGTIRLWQVETGSLLAVYNQDISKVTMNGIIDTTSAGITALTFDPTNLLVISGTSDGIVRKHSLRERVIMGTFIGHSRGAILNLLLTKHGHLLSSSMDRTIRLWDIDSGKQITGCKYFSQTMVYDHHRDIVFAASDTGTIAVIQIVKDLNNSWSLKKIKVLDLKKPAILHLHYNTYVDQLTVTSIETNIASVQNATGIPFESVENDYKKQVNLVQGLWETTNNRLTITPSQSNNSLAKSQSINNQLNQSTTSTINQQQQQQQQQQQQQQQQQQQQQQYEDEFEDEYIDNQIKEKQQQLLQQQQQQQQQQQNEEEPIEDYIFSNEISSELTEEFIQLSIEELKNIKLTNMIENTLNSDQMILIDRLKQLEFLGNELFEHQSSQEEKEYNEARKLKYVNGLTQFQDSIEEMSEDYVSCMRMLIKTNDADIVLDTDNCKDIKIRSLEQKRMEILERHRLELEQFQGEVDRELSVFSDQQLPLITKKVANECFENKKRLLNSQESIEKSIQTYLSNTFPAVNQRYHLGPLISENSTTVFRAFDCKSLIPVAVKVLPPVALNIPVHENLTKVYQVCQTPQSIYVIMEPSTTSLKPLVESMDQHQLPISMVISIMKQLLQCLLFLHSSSLVYRDLNPSRVLLTTTTTTANDDVDCELQQQQQQQVKVKLTHFGIMRSLQGNVDSEPAEDGMIYGSPEIFGRVINTESDIWSLGVIFIYLLQTKQERTKPLFHGHNNKSVIESIVKIVGRPFQKDIDRMIANGNMTSDAIQLLQYAASLPVPFEDSIDNLRSHCSLASDSALDLLTQMLQFVPHKRISIEQALSHPFILNLPKQQQQQQQQKQQQQQQQQQQQEIIPKDDSLTDISSNKQETVVYDANIQINQEDLISKIKENEIQKEIDFKENQINEEIKEDVKEEIEEDIKEEIKEEIKEESKEVQEEAKEEIKEEIQIETQEVKEEIKEEVQVEIKEEKIKEEIKEEIKEETQEEIKEENKDEIQETIKEEVQVEIKEEIKEETQEEIKEILNEVQVKEEVKEEIQEEVSQETLSEIQEEVKEEIQEDIKEEVKEEIQNEIREEIQNEIREEIKEEIKKVSEEIQNEIQEEVKEEIQNEIQEEQQDTIKEEIQEIKQEIISERDTNQEGEISDTIVSDSKEADSIIEGPVTLERDNKNASDHDDEQQFVEEEIEVEEEIEVEEEIEVEEEIEVEEEIEVEEEIEVEEEIQVEDDTDKSNDF.

WD repeat units follow at residues 44-83 (SSKR…IKQL), 109-152 (IRNI…AVYN), 166-205 (TTSA…IMGT), and 208-247 (GHSR…QITG). Positions 636-954 (EKSIQTYLSN…IEQALSHPFI (319 aa)) constitute a Protein kinase domain. A compositionally biased stretch (low complexity) spans 959-979 (KQQQQQQQQKQQQQQQQQQQQ). Disordered regions lie at residues 959 to 989 (KQQQ…DSLT), 1258 to 1311 (IISE…VEEE), and 1331 to 1360 (EVEE…SNDF). 2 coiled-coil regions span residues 1014–1269 (SKIK…QEGE) and 1297–1352 (NASD…QVED). Residues 1291 to 1300 (LERDNKNASD) are compositionally biased toward basic and acidic residues. 2 stretches are compositionally biased toward acidic residues: residues 1301–1311 (HDDEQQFVEEE) and 1331–1354 (EVEE…EDDT).

It belongs to the protein kinase superfamily. CMGC Ser/Thr protein kinase family.

The chain is Probable inactive protein kinase DDB_G0270444 from Dictyostelium discoideum (Social amoeba).